We begin with the raw amino-acid sequence, 405 residues long: Cytochrome P450 107B1 (405 aa).

A heme-binding site is contributed by cysteine 352.

This sequence belongs to the cytochrome P450 family. Heme is required as a cofactor.

It is found in the cytoplasm. Functionally, not known, probably involved in the catabolism of octane and guaiacol. It displays a weak activity in the O-dealkylation of 7-ethoxycoumarin. This chain is Cytochrome P450 107B1 (cyp107B1), found in Saccharopolyspora erythraea (strain ATCC 11635 / DSM 40517 / JCM 4748 / NBRC 13426 / NCIMB 8594 / NRRL 2338).